The sequence spans 404 residues: Cysteine desulfurase IscS (404 aa).

Residues 75–76 (AT), Asn-155, Gln-183, and 203–205 (SAH) each bind pyridoxal 5'-phosphate. N6-(pyridoxal phosphate)lysine is present on Lys-206. Thr-243 contacts pyridoxal 5'-phosphate. Cys-328 functions as the Cysteine persulfide intermediate in the catalytic mechanism. Residue Cys-328 participates in [2Fe-2S] cluster binding.

It belongs to the class-V pyridoxal-phosphate-dependent aminotransferase family. NifS/IscS subfamily. As to quaternary structure, homodimer. Forms a heterotetramer with IscU, interacts with other sulfur acceptors. The cofactor is pyridoxal 5'-phosphate.

It localises to the cytoplasm. The catalysed reaction is (sulfur carrier)-H + L-cysteine = (sulfur carrier)-SH + L-alanine. It functions in the pathway cofactor biosynthesis; iron-sulfur cluster biosynthesis. Master enzyme that delivers sulfur to a number of partners involved in Fe-S cluster assembly, tRNA modification or cofactor biosynthesis. Catalyzes the removal of elemental sulfur atoms from cysteine to produce alanine. Functions as a sulfur delivery protein for Fe-S cluster synthesis onto IscU, an Fe-S scaffold assembly protein, as well as other S acceptor proteins. The sequence is that of Cysteine desulfurase IscS from Shewanella sediminis (strain HAW-EB3).